Consider the following 229-residue polypeptide: Phosphoglycolate phosphatase (229 aa).

The active-site Nucleophile is the Asp18. Residues Asp18, Asp20, and Asp176 each contribute to the Mg(2+) site.

The protein belongs to the HAD-like hydrolase superfamily. CbbY/CbbZ/Gph/YieH family. Mg(2+) serves as cofactor.

The catalysed reaction is 2-phosphoglycolate + H2O = glycolate + phosphate. The protein operates within organic acid metabolism; glycolate biosynthesis; glycolate from 2-phosphoglycolate: step 1/1. Its function is as follows. Specifically catalyzes the dephosphorylation of 2-phosphoglycolate. Is involved in the dissimilation of the intracellular 2-phosphoglycolate formed during the DNA repair of 3'-phosphoglycolate ends, a major class of DNA lesions induced by oxidative stress. This chain is Phosphoglycolate phosphatase, found in Xylella fastidiosa (strain Temecula1 / ATCC 700964).